A 206-amino-acid chain; its full sequence is Large ribosomal subunit protein uL4 (206 aa).

Residues 47–94 form a disordered region; the sequence is NRAQKGRSEIAKSTRKPFRQKGTGNARAGMASSPLWRGGGKIFPNSPD.

The protein belongs to the universal ribosomal protein uL4 family. Part of the 50S ribosomal subunit.

One of the primary rRNA binding proteins, this protein initially binds near the 5'-end of the 23S rRNA. It is important during the early stages of 50S assembly. It makes multiple contacts with different domains of the 23S rRNA in the assembled 50S subunit and ribosome. Functionally, forms part of the polypeptide exit tunnel. This Azoarcus sp. (strain BH72) protein is Large ribosomal subunit protein uL4.